The sequence spans 180 residues: Isopentenyl-diphosphate Delta-isomerase (180 aa).

Residues His-29 and His-36 each contribute to the Mn(2+) site. The active site involves Cys-71. His-73 lines the Mn(2+) pocket. Glu-91 serves as a coordination point for Mg(2+). Mn(2+) contacts are provided by Glu-118 and Glu-120. Glu-120 is a catalytic residue.

The protein belongs to the IPP isomerase type 1 family. Mg(2+) is required as a cofactor. Requires Mn(2+) as cofactor.

Its subcellular location is the cytoplasm. The catalysed reaction is isopentenyl diphosphate = dimethylallyl diphosphate. It participates in isoprenoid biosynthesis; dimethylallyl diphosphate biosynthesis; dimethylallyl diphosphate from isopentenyl diphosphate: step 1/1. Functionally, catalyzes the 1,3-allylic rearrangement of the homoallylic substrate isopentenyl (IPP) to its highly electrophilic allylic isomer, dimethylallyl diphosphate (DMAPP). The chain is Isopentenyl-diphosphate Delta-isomerase from Kocuria rhizophila (strain ATCC 9341 / DSM 348 / NBRC 103217 / DC2201).